A 247-amino-acid chain; its full sequence is tRNA pseudouridine synthase A (247 aa).

Aspartate 52 (nucleophile) is an active-site residue. Tyrosine 113 provides a ligand contact to substrate.

This sequence belongs to the tRNA pseudouridine synthase TruA family. As to quaternary structure, homodimer.

The catalysed reaction is uridine(38/39/40) in tRNA = pseudouridine(38/39/40) in tRNA. Functionally, formation of pseudouridine at positions 38, 39 and 40 in the anticodon stem and loop of transfer RNAs. The sequence is that of tRNA pseudouridine synthase A from Rhizobium meliloti (strain 1021) (Ensifer meliloti).